The chain runs to 385 residues: Leucine aminopeptidase 1 (385 aa).

Positions 1–20 (MKFPSLLSLGVAASTTIVAA) are cleaved as a signal peptide. Residues 21–87 (VPDQKPIGDI…FPKTFAQTTV (67 aa)) constitute a propeptide that is removed on maturation. The N-linked (GlcNAc...) asparagine glycan is linked to Asn-177. The Zn(2+) site is built by His-185, Asp-204, Glu-243, and Asp-270. Cys-319 and Cys-323 are oxidised to a cystine. His-352 contributes to the Zn(2+) binding site.

This sequence belongs to the peptidase M28 family. M28E subfamily. As to quaternary structure, monomer. Zn(2+) serves as cofactor.

Its subcellular location is the secreted. Its function is as follows. Extracellular aminopeptidase that allows assimilation of proteinaceous substrates. The protein is Leucine aminopeptidase 1 (LAP1) of Ajellomyces capsulatus (strain G186AR / H82 / ATCC MYA-2454 / RMSCC 2432) (Darling's disease fungus).